Reading from the N-terminus, the 57-residue chain is Large ribosomal subunit protein bL32 (57 aa).

Belongs to the bacterial ribosomal protein bL32 family.

The polypeptide is Large ribosomal subunit protein bL32 (Geobacillus sp. (strain WCH70)).